The following is a 268-amino-acid chain: 4-hydroxy-tetrahydrodipicolinate reductase (268 aa).

NAD(+) contacts are provided by residues 9–14 (GAAGRM), 99–101 (GTT), and 123–126 (ASNF). Catalysis depends on histidine 156, which acts as the Proton donor/acceptor. Histidine 157 is a binding site for (S)-2,3,4,5-tetrahydrodipicolinate. The active-site Proton donor is the lysine 160. (S)-2,3,4,5-tetrahydrodipicolinate is bound at residue 166–167 (GT).

This sequence belongs to the DapB family.

The protein localises to the cytoplasm. The enzyme catalyses (S)-2,3,4,5-tetrahydrodipicolinate + NAD(+) + H2O = (2S,4S)-4-hydroxy-2,3,4,5-tetrahydrodipicolinate + NADH + H(+). It catalyses the reaction (S)-2,3,4,5-tetrahydrodipicolinate + NADP(+) + H2O = (2S,4S)-4-hydroxy-2,3,4,5-tetrahydrodipicolinate + NADPH + H(+). The protein operates within amino-acid biosynthesis; L-lysine biosynthesis via DAP pathway; (S)-tetrahydrodipicolinate from L-aspartate: step 4/4. In terms of biological role, catalyzes the conversion of 4-hydroxy-tetrahydrodipicolinate (HTPA) to tetrahydrodipicolinate. This is 4-hydroxy-tetrahydrodipicolinate reductase from Saccharophagus degradans (strain 2-40 / ATCC 43961 / DSM 17024).